Reading from the N-terminus, the 498-residue chain is Zinc finger protein 79 (498 aa).

A disordered region spans residues 1–23; sequence MLEEGVLPSPGPALPQEENTGEE. Residues 38–109 enclose the KRAB domain; the sequence is TFFSSVTVAF…EGEDLRSPSP (72 aa). 11 consecutive C2H2-type zinc fingers follow at residues 193–215, 221–243, 249–271, 277–299, 305–327, 333–355, 361–383, 389–411, 417–439, 445–467, and 473–495; these read YACNECGKAFSYCSSLSQHQKSH, YECSECGKAFSQSSSLIQHQRIH, YKCSECGRAFSQNANLTKHQRTH, YRCSECEKAFSDCSALVQHQRIH, YECSDCGKAFRHSANLTNHQRTH, YKCSECGKAFSYCAAFIQHQRIH, YRCAACGKAFSQSANLTNHQRTH, YKCSECGKAFSQSTNLIIHQKTH, YKCNECGKFFSESSALIRHHIIH, YECNECGKAFNQSSSLSQHQRIH, and YECSECGKAFRCSSAFVRHQRLH.

The protein belongs to the krueppel C2H2-type zinc-finger protein family.

The protein localises to the nucleus. May be involved in transcriptional regulation. The protein is Zinc finger protein 79 (ZNF79) of Homo sapiens (Human).